The chain runs to 1304 residues: Myosin-1 (1304 aa).

A compositionally biased stretch (basic residues) spans 1–12; sequence MAIVKRGVRTKN. A disordered region spans residues 1 to 24; that stretch reads MAIVKRGVRTKNKQSQQPSKSGIK. Residues 36-730 form the Myosin motor domain; that stretch reads VGVSDLTLLS…TLFALEDMRD (695 aa). 129–136 contacts ATP; the sequence is GESGAGKT. Ser-364 is subject to Phosphoserine. Residues 413–496 are actin-binding; sequence SIGILDIYGF…PGLFAALNDS (84 aa). IQ domains are found at residues 734-754 and 755-780; these read HNMAARIQRAWRRYIKRKDDA and ARLIQSAWKNKTHGNQFEQLRDYGNG. The TH1 domain maps to 788–978; the sequence is RRRMSMLGSR…TVTVRQGLPG (191 aa). Disordered regions lie at residues 963-1162 and 1214-1304; these read DSYK…TYKA and ECDP…DDDW. 2 stretches are compositionally biased toward polar residues: residues 964 to 983 and 1001 to 1012; these read SYKSGTVTVRQGLPGNSQNP and RGSNMRSTSSYQ. 3 stretches are compositionally biased toward low complexity: residues 1029–1052, 1072–1096, and 1120–1140; these read QPPVQQTQQRVVPPVQSQPKPQAQ, QPHAHPEQAAQAAQAAFHHTAPQAQ, and PSAPSRPARKTAPAPPAKKNV. Residues 1141–1156 are compositionally biased toward pro residues; sequence APPPPPAAASPPPKPK. The region spanning 1155–1217 is the SH3 domain; it reads PKFPTYKAAY…PAAYVVECDP (63 aa). Composition is skewed to low complexity over residues 1217 to 1227 and 1236 to 1256; these read PPANSPAGNAK and LNSASQAQQSQQQAQAPNGAG. Positions 1292-1304 are enriched in acidic residues; sequence DSDEEDEEDDDDW.

It belongs to the TRAFAC class myosin-kinesin ATPase superfamily. Myosin family. In terms of processing, phosphorylation of the TEDS site (Ser-364) is required for the polarization of the actin cytoskeleton. Phosphorylation probably activates the myosin-I ATPase activity.

The protein localises to the cytoplasm. It is found in the cytoskeleton. It localises to the actin patch. In terms of biological role, type-I myosin implicated in the organization of the actin cytoskeleton. Required for proper actin cytoskeleton polarization. At the cell cortex, assembles in patch-like structures together with proteins from the actin-polymerizing machinery and promotes actin assembly. Functions as actin nucleation-promoting factor (NPF) for the Arp2/3 complex. The chain is Myosin-1 (MYO1) from Debaryomyces hansenii (strain ATCC 36239 / CBS 767 / BCRC 21394 / JCM 1990 / NBRC 0083 / IGC 2968) (Yeast).